Reading from the N-terminus, the 482-residue chain is F-box/LRR-repeat protein At3g58930 (482 aa).

The region spanning 1–47 (MDRVSNLPDGVRGHILSFLPAKHIALTSVLSKSWLNLWKLIPILDID) is the F-box domain. 5 LRR repeats span residues 122–150 (SYED…KIRN), 175–200 (SDLI…RMAS), 222–248 (GTGC…NYSD), 313–344 (ILYL…GIKS), and 345–370 (EEGR…IIEG).

In Arabidopsis thaliana (Mouse-ear cress), this protein is F-box/LRR-repeat protein At3g58930.